Reading from the N-terminus, the 150-residue chain is Large ribosomal subunit protein bL9 (150 aa).

It belongs to the bacterial ribosomal protein bL9 family.

Its function is as follows. Binds to the 23S rRNA. The sequence is that of Large ribosomal subunit protein bL9 from Streptococcus equi subsp. equi (strain 4047).